Consider the following 210-residue polypeptide: Ribosomal RNA small subunit methyltransferase G (210 aa).

S-adenosyl-L-methionine is bound by residues Gly77, Phe82, 100-102 (ERS), 128-129 (VE), and Arg141.

Belongs to the methyltransferase superfamily. RNA methyltransferase RsmG family.

The protein localises to the cytoplasm. Functionally, specifically methylates the N7 position of a guanine in 16S rRNA. The chain is Ribosomal RNA small subunit methyltransferase G from Borrelia duttonii (strain Ly).